Reading from the N-terminus, the 70-residue chain is Large ribosomal subunit protein bL31 (70 aa).

4 residues coordinate Zn(2+): cysteine 16, cysteine 18, cysteine 38, and cysteine 41.

It belongs to the bacterial ribosomal protein bL31 family. Type A subfamily. Part of the 50S ribosomal subunit. Requires Zn(2+) as cofactor.

Its function is as follows. Binds the 23S rRNA. This Bifidobacterium longum (strain DJO10A) protein is Large ribosomal subunit protein bL31.